Here is a 266-residue protein sequence, read N- to C-terminus: Bidirectional sugar transporter SWEET7b (266 aa).

Residues 1-9 lie on the Extracellular side of the membrane; that stretch reads MVSPDLIRN. A helical membrane pass occupies residues 10 to 30; it reads MVGIVGNIISFGLFLSPVPTF. The MtN3/slv 1 domain occupies 10 to 97; that stretch reads MVGIVGNIIS…TIFFLFSDKK (88 aa). Topologically, residues 31–45 are cytoplasmic; the sequence is YRIIKNKDVQDFKAD. Residues 46 to 66 form a helical membrane-spanning segment; it reads PYLATLLNCMLWVFYGLPIVH. At 67–69 the chain is on the extracellular side; that stretch reads PNS. Residues 70–90 traverse the membrane as a helical segment; sequence ILVVTINGIGLIIEAVYLTIF. Over 91 to 101 the chain is Cytoplasmic; the sequence is FLFSDKKNKKK. The helical transmembrane segment at 102-122 threads the bilayer; the sequence is MGVVLATEALFMAAVVLGVLL. Residues 123–131 lie on the Extracellular side of the membrane; the sequence is GAHTHQRRS. The chain crosses the membrane as a helical span at residues 132–152; it reads LIVGILCAIFGTIMYSSPLTI. One can recognise a MtN3/slv 2 domain in the interval 133 to 216; that stretch reads IVGILCAIFG…LILYAIYYRT (84 aa). The Cytoplasmic portion of the chain corresponds to 153 to 165; the sequence is MSQVVKTKSVEYM. A helical transmembrane segment spans residues 166-186; sequence PLLLSVVSFLNGLCWTSYALI. The Extracellular segment spans residues 187–189; sequence RLD. Residues 190–210 form a helical membrane-spanning segment; sequence IFITIPNGLGVLFALMQLILY. At 211-266 the chain is on the cytoplasmic side; that stretch reads AIYYRTTPKKQDKNLELPTVAPVAKDTSIVTPVSKDDDVVDGGNASHVTINITIEP.

It belongs to the SWEET sugar transporter family. As to quaternary structure, forms homooligomers and/or heterooligomers.

It is found in the cell membrane. Its function is as follows. Mediates both low-affinity uptake and efflux of sugar across the plasma membrane. The sequence is that of Bidirectional sugar transporter SWEET7b (SWEET7B) from Oryza sativa subsp. indica (Rice).